Here is a 249-residue protein sequence, read N- to C-terminus: 5'-nucleotidase SurE (249 aa).

Residues aspartate 8, aspartate 9, serine 39, and asparagine 91 each coordinate a divalent metal cation.

Belongs to the SurE nucleotidase family. The cofactor is a divalent metal cation.

The protein localises to the cytoplasm. The enzyme catalyses a ribonucleoside 5'-phosphate + H2O = a ribonucleoside + phosphate. In terms of biological role, nucleotidase that shows phosphatase activity on nucleoside 5'-monophosphates. The chain is 5'-nucleotidase SurE from Vesicomyosocius okutanii subsp. Calyptogena okutanii (strain HA).